The following is a 177-amino-acid chain: NAD(P)H-quinone oxidoreductase subunit 6, chloroplastic (177 aa).

The next 5 helical transmembrane spans lie at Val-10–Thr-30, Pro-32–Leu-52, Ala-61–Met-81, Phe-90–Ile-112, and Phe-152–Thr-172.

It belongs to the complex I subunit 6 family. NDH is composed of at least 16 different subunits, 5 of which are encoded in the nucleus.

Its subcellular location is the plastid. It is found in the chloroplast thylakoid membrane. It catalyses the reaction a plastoquinone + NADH + (n+1) H(+)(in) = a plastoquinol + NAD(+) + n H(+)(out). The catalysed reaction is a plastoquinone + NADPH + (n+1) H(+)(in) = a plastoquinol + NADP(+) + n H(+)(out). Functionally, NDH shuttles electrons from NAD(P)H:plastoquinone, via FMN and iron-sulfur (Fe-S) centers, to quinones in the photosynthetic chain and possibly in a chloroplast respiratory chain. The immediate electron acceptor for the enzyme in this species is believed to be plastoquinone. Couples the redox reaction to proton translocation, and thus conserves the redox energy in a proton gradient. This is NAD(P)H-quinone oxidoreductase subunit 6, chloroplastic (ndhG) from Acorus calamus var. americanus (American sweet flag).